Reading from the N-terminus, the 153-residue chain is Nucleoside diphosphate kinase (153 aa).

Alanine 2 carries the N-acetylalanine modification. Lysine 13, phenylalanine 61, arginine 89, threonine 95, arginine 106, and asparagine 116 together coordinate ATP. Catalysis depends on histidine 119, which acts as the Pros-phosphohistidine intermediate. Residue serine 126 is modified to Phosphoserine.

This sequence belongs to the NDK family. In terms of assembly, homohexamer. Mg(2+) serves as cofactor.

It is found in the cytoplasm. The protein localises to the cytoskeleton. It catalyses the reaction a 2'-deoxyribonucleoside 5'-diphosphate + ATP = a 2'-deoxyribonucleoside 5'-triphosphate + ADP. The enzyme catalyses a ribonucleoside 5'-diphosphate + ATP = a ribonucleoside 5'-triphosphate + ADP. Its function is as follows. Major role in the synthesis of nucleoside triphosphates other than ATP. The ATP gamma phosphate is transferred to the NDP beta phosphate via a ping-pong mechanism, using a phosphorylated active-site intermediate. This Drosophila melanogaster (Fruit fly) protein is Nucleoside diphosphate kinase (awd).